A 79-amino-acid chain; its full sequence is Small ribosomal subunit protein bS18 (79 aa).

It belongs to the bacterial ribosomal protein bS18 family. In terms of assembly, part of the 30S ribosomal subunit. Forms a tight heterodimer with protein bS6.

Functionally, binds as a heterodimer with protein bS6 to the central domain of the 16S rRNA, where it helps stabilize the platform of the 30S subunit. This chain is Small ribosomal subunit protein bS18, found in Bacillus licheniformis (strain ATCC 14580 / DSM 13 / JCM 2505 / CCUG 7422 / NBRC 12200 / NCIMB 9375 / NCTC 10341 / NRRL NRS-1264 / Gibson 46).